Reading from the N-terminus, the 704-residue chain is Polyribonucleotide nucleotidyltransferase (704 aa).

Positions 487 and 493 each coordinate Mg(2+). The 60-residue stretch at Pro554–Ile613 folds into the KH domain. In terms of domain architecture, S1 motif spans Gly623–Lys691.

Belongs to the polyribonucleotide nucleotidyltransferase family. Component of the RNA degradosome, which is a multiprotein complex involved in RNA processing and mRNA degradation. The cofactor is Mg(2+).

The protein localises to the cytoplasm. The catalysed reaction is RNA(n+1) + phosphate = RNA(n) + a ribonucleoside 5'-diphosphate. In terms of biological role, involved in mRNA degradation. Catalyzes the phosphorolysis of single-stranded polyribonucleotides processively in the 3'- to 5'-direction. This is Polyribonucleotide nucleotidyltransferase from Xanthomonas campestris pv. campestris (strain B100).